The sequence spans 201 residues: ATP-dependent Clp protease proteolytic subunit (201 aa).

Ser98 serves as the catalytic Nucleophile. His123 is an active-site residue.

It belongs to the peptidase S14 family. As to quaternary structure, fourteen ClpP subunits assemble into 2 heptameric rings which stack back to back to give a disk-like structure with a central cavity, resembling the structure of eukaryotic proteasomes.

It localises to the cytoplasm. It catalyses the reaction Hydrolysis of proteins to small peptides in the presence of ATP and magnesium. alpha-casein is the usual test substrate. In the absence of ATP, only oligopeptides shorter than five residues are hydrolyzed (such as succinyl-Leu-Tyr-|-NHMec, and Leu-Tyr-Leu-|-Tyr-Trp, in which cleavage of the -Tyr-|-Leu- and -Tyr-|-Trp bonds also occurs).. Cleaves peptides in various proteins in a process that requires ATP hydrolysis. Has a chymotrypsin-like activity. Plays a major role in the degradation of misfolded proteins. This is ATP-dependent Clp protease proteolytic subunit from Neorickettsia sennetsu (strain ATCC VR-367 / Miyayama) (Ehrlichia sennetsu).